The sequence spans 165 residues: SsrA-binding protein (165 aa).

Positions 141–165 (KLHDKRENEKRKQSEREVKSALARY) are disordered. Over residues 144–159 (DKRENEKRKQSEREVK) the composition is skewed to basic and acidic residues.

It belongs to the SmpB family.

The protein resides in the cytoplasm. Required for rescue of stalled ribosomes mediated by trans-translation. Binds to transfer-messenger RNA (tmRNA), required for stable association of tmRNA with ribosomes. tmRNA and SmpB together mimic tRNA shape, replacing the anticodon stem-loop with SmpB. tmRNA is encoded by the ssrA gene; the 2 termini fold to resemble tRNA(Ala) and it encodes a 'tag peptide', a short internal open reading frame. During trans-translation Ala-aminoacylated tmRNA acts like a tRNA, entering the A-site of stalled ribosomes, displacing the stalled mRNA. The ribosome then switches to translate the ORF on the tmRNA; the nascent peptide is terminated with the 'tag peptide' encoded by the tmRNA and targeted for degradation. The ribosome is freed to recommence translation, which seems to be the essential function of trans-translation. The polypeptide is SsrA-binding protein (Prochlorococcus marinus (strain SARG / CCMP1375 / SS120)).